Reading from the N-terminus, the 311-residue chain is Olfactory receptor 6B1 (311 aa).

The Extracellular portion of the chain corresponds to 1-25; the sequence is MELENQTRVTKFILVGFPGSLSMRA. Asparagine 5 is a glycosylation site (N-linked (GlcNAc...) asparagine). A helical membrane pass occupies residues 26–46; it reads AMFLIFLVAYILTVAENVIII. The Cytoplasmic segment spans residues 47–54; the sequence is LLVLQNRP. A helical membrane pass occupies residues 55–75; it reads LHKPMYFFLANLSFLETWYIS. The Extracellular portion of the chain corresponds to 76–99; the sequence is VTVPKLLFSFWSVNNSISFTLCMI. Cysteine 97 and cysteine 189 are joined by a disulfide. A helical transmembrane segment spans residues 100–120; the sequence is QLYFFIALMCTECVLLAAMAY. Topologically, residues 121–139 are cytoplasmic; the sequence is DRYVAICRPLHYPTIMSHG. Residues 140 to 160 form a helical membrane-spanning segment; it reads LCFRLALGSWAIGFGISLAKI. Topologically, residues 161–196 are extracellular; it reads YFISCLSFCGPNVINHFFCDISPVLNLSCTDMSITE. Residues 197–217 traverse the membrane as a helical segment; it reads LVDFILALVIFLFPLFITVLS. Residues 218–235 lie on the Cytoplasmic side of the membrane; the sequence is YGCILATILCMPTGKQKA. The chain crosses the membrane as a helical span at residues 236–256; it reads FSTCASHLVVVTIFYSAIIFM. Topologically, residues 257-269 are extracellular; sequence YARPRVIHAFNMN. Residues 270-290 form a helical membrane-spanning segment; it reads KIISIFYAIVTPSLNPFIYCL. Over 291–311 the chain is Cytoplasmic; the sequence is RNREVKEALKKLAYCQASRSD.

The protein belongs to the G-protein coupled receptor 1 family.

It localises to the cell membrane. Its function is as follows. Odorant receptor. The polypeptide is Olfactory receptor 6B1 (OR6B1) (Homo sapiens (Human)).